Here is a 152-residue protein sequence, read N- to C-terminus: Transcriptional regulator MraZ (152 aa).

SpoVT-AbrB domains are found at residues 5-52 and 81-124; these read ATLV…PLPE and ASEC…DEQT.

This sequence belongs to the MraZ family. Forms oligomers.

Its subcellular location is the cytoplasm. It localises to the nucleoid. In terms of biological role, negatively regulates its own expression and that of the subsequent genes in the proximal part of the division and cell wall (dcw) gene cluster. Acts by binding directly to DNA. May also regulate the expression of genes outside the dcw cluster. The polypeptide is Transcriptional regulator MraZ (Pectobacterium carotovorum subsp. carotovorum (strain PC1)).